The chain runs to 377 residues: MKFELDTTQGRARRGRLVFERGTVETPAFMPVGTYGTVKGMTPEEVRATGADILLGNTFHLWLRPGEEIMRKHGDLHDFMNWQRPILTDSGGFQVFSLGDIRKITEEGVHFRSPINGEKIFLDPEKSMQIQNSLGSDVVMIFDECTPYPATEDEARKSMQMSLRWAQRSRDEFDKLENPNSLFGIIQGGVYEDLRDESLKGLVDIGFDGYAVGGLAVGEPKADMHRILEHTCPQIPTDKPRYLMGVGKPEDLVEGVRRGVDMFDCVMPTRNARNGHLFTTEGVIKIRNARHRDDTSPLDDKCDCYTCKNYSRAYLYHLDRCNEILGARLNTIHNLRYYQKLMEGLRGAIETGTLDAFVEEFYTSQGREVPEVPELTD.

Residue aspartate 89 is the Proton acceptor of the active site. Substrate is bound by residues 89–93 (DSGGF), aspartate 143, glutamine 187, and glycine 214. The segment at 245–251 (GVGKPED) is RNA binding. Aspartate 264 (nucleophile) is an active-site residue. Residues 269–273 (TRNAR) are RNA binding; important for wobble base 34 recognition. Zn(2+) contacts are provided by cysteine 302, cysteine 304, cysteine 307, and histidine 333.

It belongs to the queuine tRNA-ribosyltransferase family. Homodimer. Within each dimer, one monomer is responsible for RNA recognition and catalysis, while the other monomer binds to the replacement base PreQ1. It depends on Zn(2+) as a cofactor.

It catalyses the reaction 7-aminomethyl-7-carbaguanine + guanosine(34) in tRNA = 7-aminomethyl-7-carbaguanosine(34) in tRNA + guanine. The protein operates within tRNA modification; tRNA-queuosine biosynthesis. Functionally, catalyzes the base-exchange of a guanine (G) residue with the queuine precursor 7-aminomethyl-7-deazaguanine (PreQ1) at position 34 (anticodon wobble position) in tRNAs with GU(N) anticodons (tRNA-Asp, -Asn, -His and -Tyr). Catalysis occurs through a double-displacement mechanism. The nucleophile active site attacks the C1' of nucleotide 34 to detach the guanine base from the RNA, forming a covalent enzyme-RNA intermediate. The proton acceptor active site deprotonates the incoming PreQ1, allowing a nucleophilic attack on the C1' of the ribose to form the product. After dissociation, two additional enzymatic reactions on the tRNA convert PreQ1 to queuine (Q), resulting in the hypermodified nucleoside queuosine (7-(((4,5-cis-dihydroxy-2-cyclopenten-1-yl)amino)methyl)-7-deazaguanosine). The chain is Queuine tRNA-ribosyltransferase from Shewanella sediminis (strain HAW-EB3).